We begin with the raw amino-acid sequence, 138 residues long: Probable phospholipase A2 homolog 1 (138 aa).

A signal peptide spans 1–21 (MPPRSPLLALVFLAAGVLSSA). Intrachain disulfides connect Cys29–Cys56, Cys33–Cys62, Cys38–Cys109, Cys49–Cys69, Cys68–Cys93, and Cys75–Cys86. Positions 48, 50, and 53 each coordinate Ca(2+). His72 is a catalytic residue. Residue Asp73 participates in Ca(2+) binding.

Belongs to the phospholipase A2 family. The cofactor is Ca(2+).

Its subcellular location is the secreted. It catalyses the reaction a 1,2-diacyl-sn-glycero-3-phosphocholine + H2O = a 1-acyl-sn-glycero-3-phosphocholine + a fatty acid + H(+). PA2 catalyzes the calcium-dependent hydrolysis of the 2-acyl groups in 3-sn-phosphoglycerides. Releases lysophospholipids (LPLs) and free fatty acids (FFAs) from membrane phospholipids in response to hormones and other external stimuli. The polypeptide is Probable phospholipase A2 homolog 1 (PLA2-I) (Oryza sativa subsp. japonica (Rice)).